The sequence spans 202 residues: Large ribosomal subunit protein bL17 (202 aa).

The tract at residues 148 to 202 (DEAPAAESTDAAQVEAGGVEQPDTLPDADAPATADEGVEVDAAEVDPSDEKKDQA) is disordered. Over residues 169–182 (PDTLPDADAPATAD) the composition is skewed to low complexity. A compositionally biased stretch (acidic residues) spans 183 to 194 (EGVEVDAAEVDP).

This sequence belongs to the bacterial ribosomal protein bL17 family. As to quaternary structure, part of the 50S ribosomal subunit. Contacts protein L32.

The sequence is that of Large ribosomal subunit protein bL17 from Kineococcus radiotolerans (strain ATCC BAA-149 / DSM 14245 / SRS30216).